The chain runs to 304 residues: Putative S-adenosyl-L-methionine-dependent methyltransferase MSMEG_1482/MSMEI_1446 (304 aa).

S-adenosyl-L-methionine-binding positions include D130 and 159–160 (DL).

The protein belongs to the UPF0677 family.

Functionally, exhibits S-adenosyl-L-methionine-dependent methyltransferase activity. The protein is Putative S-adenosyl-L-methionine-dependent methyltransferase MSMEG_1482/MSMEI_1446 of Mycolicibacterium smegmatis (strain ATCC 700084 / mc(2)155) (Mycobacterium smegmatis).